We begin with the raw amino-acid sequence, 284 residues long: Genome polyprotein (284 aa).

Disordered regions lie at residues 16-57 (HQAN…GTSG) and 255-284 (GIST…GKNM). The segment covering 35–44 (EQSSIQSNLS) has biased composition (polar residues).

It belongs to the potyviridae genome polyprotein family. In terms of processing, genome polyprotein of potyviruses undergoes post-translational proteolytic processing by the main proteinase NIa-pro resulting in the production of at least ten individual proteins. The P1 proteinase and the HC-pro cleave only their respective C-termini autocatalytically. 6K1 is essential for proper proteolytic separation of P3 from CI.

Its subcellular location is the virion. It catalyses the reaction RNA(n) + a ribonucleoside 5'-triphosphate = RNA(n+1) + diphosphate. In terms of biological role, an RNA-dependent RNA polymerase that plays an essential role in the virus replication. Its function is as follows. Involved in aphid transmission, cell-to-cell and systemis movement, encapsidation of the viral RNA and in the regulation of viral RNA amplification. The chain is Genome polyprotein from Capsicum (peppers).